The sequence spans 83 residues: Small ribosomal subunit protein bS20 (83 aa).

It belongs to the bacterial ribosomal protein bS20 family.

In terms of biological role, binds directly to 16S ribosomal RNA. The chain is Small ribosomal subunit protein bS20 from Amoebophilus asiaticus (strain 5a2).